The sequence spans 389 residues: Leucine aminopeptidase 1 (389 aa).

A signal peptide spans methionine 1–alanine 18. Positions alanine 19 to serine 89 are excised as a propeptide. Residues asparagine 99, asparagine 156, and asparagine 180 are each glycosylated (N-linked (GlcNAc...) asparagine). Residues histidine 188, aspartate 207, glutamate 246, and aspartate 273 each contribute to the Zn(2+) site. Cysteine 322 and cysteine 326 are disulfide-bonded. Histidine 355 serves as a coordination point for Zn(2+).

It belongs to the peptidase M28 family. M28E subfamily. Monomer. Zn(2+) is required as a cofactor.

Its subcellular location is the secreted. In terms of biological role, extracellular aminopeptidase that allows assimilation of proteinaceous substrates. In Phaeosphaeria nodorum (strain SN15 / ATCC MYA-4574 / FGSC 10173) (Glume blotch fungus), this protein is Leucine aminopeptidase 1 (LAP1).